A 509-amino-acid polypeptide reads, in one-letter code: MNGAVLIADVVATSAAITATRSRKAKVAAIADLLARADPRRSGADELETVTAYVGGALRQRRTGLGWRGLTKLPAPAPGPTLSVLEVHEAFERIAAPAGAGSQAARAAAVADLFGRATAEEQQWLRGVVTGEVRQGALDSLVQEGLAAAAGVPLPEVRRAAMLAGSTVAVAAAAFEGVAALGAVGLQVGRPVLPMLASSAPDLAAALARAGGDEVAVDTKLDGIRIQVHRSGPDVVVATRSLEDITARLPEVVEVARALPADSFVLDGEALALAEDGRPRPFQETAARTAMGAGVEVTPYFFDVLHLDGADLLDVSAAERAAVLERLVPAEHRVPRVVTADLGVAEEFLAGALRSGHEGVVVKSLAAPYEAGRRGASWVKVKPVHTLDLVVLAVEWGSGRRQGWLSNIHLGARDPATGGLVMLGKTFKGMTDEVLAWQTERFLELETSRSAHVVHVRPEQVVEIAFDGVQRSTRYPGGVALRFARVLRYRDDKPVAEIDTVDTVRSFLG.

An ATP-binding site is contributed by D218. Residue K220 is the N6-AMP-lysine intermediate of the active site. Residues R225, R240, E269, F302, R374, and K380 each contribute to the ATP site.

It belongs to the ATP-dependent DNA ligase family. The cofactor is Mg(2+).

The catalysed reaction is ATP + (deoxyribonucleotide)n-3'-hydroxyl + 5'-phospho-(deoxyribonucleotide)m = (deoxyribonucleotide)n+m + AMP + diphosphate.. In terms of biological role, DNA ligase that seals nicks in double-stranded DNA during DNA replication, DNA recombination and DNA repair. This Nocardioides sp. (strain ATCC BAA-499 / JS614) protein is Probable DNA ligase.